Reading from the N-terminus, the 138-residue chain is Basic phospholipase A2 Cvv-N6 (138 aa).

Residues methionine 1 to glycine 16 form the signal peptide. Intrachain disulfides connect cysteine 42-cysteine 131, cysteine 44-cysteine 60, cysteine 59-cysteine 111, cysteine 65-cysteine 138, cysteine 66-cysteine 104, cysteine 73-cysteine 97, and cysteine 91-cysteine 102. Residues tyrosine 43, glycine 45, and glycine 47 each coordinate Ca(2+). The active site involves histidine 63. Aspartate 64 serves as a coordination point for Ca(2+). Aspartate 105 is an active-site residue.

Belongs to the phospholipase A2 family. Group II subfamily. D49 sub-subfamily. Monomer. Binds to calmodulin. Ca(2+) serves as cofactor. In terms of tissue distribution, expressed by the venom gland.

Its subcellular location is the secreted. It carries out the reaction a 1,2-diacyl-sn-glycero-3-phosphocholine + H2O = a 1-acyl-sn-glycero-3-phosphocholine + a fatty acid + H(+). Heparin and wedelolactone inhibit the myotoxic activity. The PLA2 inhibitor, para-bromophenacyl bromide (BPB), inhibits enzymatic and myotoxic activities. Snake venom phospholipase A2 (PLA2) that is myotoxic and displays moderate edema-inducing activity in rat paws. Does not show neurotoxic activity. PLA2 catalyzes the calcium-dependent hydrolysis of the 2-acyl groups in 3-sn-phosphoglycerides. The chain is Basic phospholipase A2 Cvv-N6 from Crotalus viridis viridis (Prairie rattlesnake).